A 251-amino-acid chain; its full sequence is Ubiquinone/menaquinone biosynthesis C-methyltransferase UbiE (251 aa).

S-adenosyl-L-methionine is bound by residues threonine 74, aspartate 95, 123–124 (NA), and serine 140.

The protein belongs to the class I-like SAM-binding methyltransferase superfamily. MenG/UbiE family.

It catalyses the reaction a 2-demethylmenaquinol + S-adenosyl-L-methionine = a menaquinol + S-adenosyl-L-homocysteine + H(+). It carries out the reaction a 2-methoxy-6-(all-trans-polyprenyl)benzene-1,4-diol + S-adenosyl-L-methionine = a 5-methoxy-2-methyl-3-(all-trans-polyprenyl)benzene-1,4-diol + S-adenosyl-L-homocysteine + H(+). It functions in the pathway quinol/quinone metabolism; menaquinone biosynthesis; menaquinol from 1,4-dihydroxy-2-naphthoate: step 2/2. It participates in cofactor biosynthesis; ubiquinone biosynthesis. Methyltransferase required for the conversion of demethylmenaquinol (DMKH2) to menaquinol (MKH2) and the conversion of 2-polyprenyl-6-methoxy-1,4-benzoquinol (DDMQH2) to 2-polyprenyl-3-methyl-6-methoxy-1,4-benzoquinol (DMQH2). This is Ubiquinone/menaquinone biosynthesis C-methyltransferase UbiE from Enterobacter sp. (strain 638).